The chain runs to 343 residues: Heat-inducible transcription repressor HrcA (343 aa).

This sequence belongs to the HrcA family.

Its function is as follows. Negative regulator of class I heat shock genes (grpE-dnaK-dnaJ and groELS operons). Prevents heat-shock induction of these operons. The chain is Heat-inducible transcription repressor HrcA from Mycolicibacterium paratuberculosis (strain ATCC BAA-968 / K-10) (Mycobacterium paratuberculosis).